The primary structure comprises 264 residues: 4-hydroxy-tetrahydrodipicolinate reductase (264 aa).

9–14 (GCSGRM) lines the NAD(+) pocket. Residue Arg36 participates in NADP(+) binding. NAD(+) is bound by residues 100 to 102 (GTT) and 121 to 124 (SANM). His154 (proton donor/acceptor) is an active-site residue. His155 provides a ligand contact to (S)-2,3,4,5-tetrahydrodipicolinate. Lys158 serves as the catalytic Proton donor. 164 to 165 (GT) is a (S)-2,3,4,5-tetrahydrodipicolinate binding site.

Belongs to the DapB family.

The protein localises to the cytoplasm. The catalysed reaction is (S)-2,3,4,5-tetrahydrodipicolinate + NAD(+) + H2O = (2S,4S)-4-hydroxy-2,3,4,5-tetrahydrodipicolinate + NADH + H(+). It catalyses the reaction (S)-2,3,4,5-tetrahydrodipicolinate + NADP(+) + H2O = (2S,4S)-4-hydroxy-2,3,4,5-tetrahydrodipicolinate + NADPH + H(+). Its pathway is amino-acid biosynthesis; L-lysine biosynthesis via DAP pathway; (S)-tetrahydrodipicolinate from L-aspartate: step 4/4. Catalyzes the conversion of 4-hydroxy-tetrahydrodipicolinate (HTPA) to tetrahydrodipicolinate. This Wolbachia sp. subsp. Brugia malayi (strain TRS) protein is 4-hydroxy-tetrahydrodipicolinate reductase.